We begin with the raw amino-acid sequence, 72 residues long: uncharacterized protein (72 aa).

The signal sequence occupies residues 1 to 19; sequence MKKWAVIISAVGLAFAVSG. A lipid anchor (N-palmitoyl cysteine) is attached at cysteine 20. Cysteine 20 carries the S-diacylglycerol cysteine lipid modification.

To E.coli YgdI.

It is found in the cell membrane. This is an uncharacterized protein from Escherichia coli O6:H1 (strain CFT073 / ATCC 700928 / UPEC).